We begin with the raw amino-acid sequence, 525 residues long: Bifunctional enzyme NanE/NanK (525 aa).

A manNAc-6-P epimerase region spans residues 1 to 241 (MRGSPRNLCR…DAVESAAKPS (241 aa)). The segment at 242-525 (SPVLAFDIGG…VADLAATYFS (284 aa)) is manNAc kinase. Residues 246–253 (AFDIGGTK) and 372–379 (GIGGGIVL) contribute to the ATP site.

The protein in the N-terminal section; belongs to the NanE family. In the C-terminal section; belongs to the ROK (NagC/XylR) family. NanK subfamily.

It catalyses the reaction an N-acyl-D-glucosamine 6-phosphate = an N-acyl-D-mannosamine 6-phosphate. The catalysed reaction is an N-acyl-D-mannosamine + ATP = an N-acyl-D-mannosamine 6-phosphate + ADP + H(+). Its pathway is amino-sugar metabolism; N-acetylneuraminate degradation; D-fructose 6-phosphate from N-acetylneuraminate: step 2/5. The protein operates within amino-sugar metabolism; N-acetylneuraminate degradation; D-fructose 6-phosphate from N-acetylneuraminate: step 3/5. Converts N-acetylmannosamine-6-phosphate (ManNAc-6-P) to N-acetylglucosamine-6-phosphate (GlcNAc-6-P). Its function is as follows. Catalyzes the phosphorylation of N-acetylmannosamine (ManNAc) to ManNAc-6-P. The sequence is that of Bifunctional enzyme NanE/NanK (nanEK) from Brucella suis biovar 1 (strain 1330).